Here is a 485-residue protein sequence, read N- to C-terminus: GlcNAc-binding protein A (485 aa).

A signal peptide spans 1–29 (MKKQPQKTLLAIALSVVSGTAMSHGYVSA). A Chitin-binding type-4 domain is found at 30–200 (VENGVAEARV…SFYNVIDVKF (171 aa)). One can recognise a Chitin-binding type-3 domain in the interval 437–478 (ADTKVLASDGAIYQCKPFPYSGYCVQWTPTATQYQPGTGSHW).

The protein belongs to the GbpA family.

It is found in the secreted. Functionally, probably interacts with GlcNAc residues. May promote attachment to both epithelial cell surfaces and chitin. This is GlcNAc-binding protein A from Vibrio vulnificus (strain CMCP6).